A 287-amino-acid chain; its full sequence is Pantothenate synthetase (287 aa).

Residue M30 to H37 participates in ATP binding. The Proton donor role is filled by H37. Q61 lines the (R)-pantoate pocket. Beta-alanine is bound at residue Q61. ATP is bound at residue G148–D151. Q154 lines the (R)-pantoate pocket. ATP-binding positions include I177 and L185 to R188.

It belongs to the pantothenate synthetase family. As to quaternary structure, homodimer.

Its subcellular location is the cytoplasm. The catalysed reaction is (R)-pantoate + beta-alanine + ATP = (R)-pantothenate + AMP + diphosphate + H(+). It participates in cofactor biosynthesis; (R)-pantothenate biosynthesis; (R)-pantothenate from (R)-pantoate and beta-alanine: step 1/1. Its function is as follows. Catalyzes the condensation of pantoate with beta-alanine in an ATP-dependent reaction via a pantoyl-adenylate intermediate. This is Pantothenate synthetase from Psychrobacter cryohalolentis (strain ATCC BAA-1226 / DSM 17306 / VKM B-2378 / K5).